Reading from the N-terminus, the 208-residue chain is Kininogen-1b (208 aa).

An N-terminal signal peptide occupies residues 1–23 (MRLWFCLSFFIVLCLEHFPETLA). The span at 27-44 (NVPESEEKTEQYLRDLPK) shows a compositional bias: basic and acidic residues. The disordered stretch occupies residues 27–208 (NVPESEEKTE…RGKFHSQSHV (182 aa)).

Belongs to the bradykinin-related peptide family. As to expression, expressed by the skin glands.

It localises to the secreted. Its function is as follows. In vitro, produces constriction of guinea pig ileum smooth muscle. May target bradykinin receptors (BDKRB). The chain is Kininogen-1b from Bombina maxima (Giant fire-bellied toad).